A 342-amino-acid chain; its full sequence is Phospho-N-acetylmuramoyl-pentapeptide-transferase (342 aa).

Transmembrane regions (helical) follow at residues Val-8–Pro-28, Gly-58–Phe-78, Ile-86–Leu-106, Ile-116–Leu-136, Gly-152–Ser-172, Leu-184–Leu-204, Val-213–Leu-233, Val-242–Met-262, Phe-267–Val-287, and Ile-318–Ile-338.

It belongs to the glycosyltransferase 4 family. MraY subfamily. Requires Mg(2+) as cofactor.

Its subcellular location is the cell inner membrane. It catalyses the reaction UDP-N-acetyl-alpha-D-muramoyl-L-alanyl-gamma-D-glutamyl-meso-2,6-diaminopimeloyl-D-alanyl-D-alanine + di-trans,octa-cis-undecaprenyl phosphate = di-trans,octa-cis-undecaprenyl diphospho-N-acetyl-alpha-D-muramoyl-L-alanyl-D-glutamyl-meso-2,6-diaminopimeloyl-D-alanyl-D-alanine + UMP. It functions in the pathway cell wall biogenesis; peptidoglycan biosynthesis. In terms of biological role, catalyzes the initial step of the lipid cycle reactions in the biosynthesis of the cell wall peptidoglycan: transfers peptidoglycan precursor phospho-MurNAc-pentapeptide from UDP-MurNAc-pentapeptide onto the lipid carrier undecaprenyl phosphate, yielding undecaprenyl-pyrophosphoryl-MurNAc-pentapeptide, known as lipid I. In Anaplasma marginale (strain Florida), this protein is Phospho-N-acetylmuramoyl-pentapeptide-transferase.